Here is a 214-residue protein sequence, read N- to C-terminus: uncharacterized protein (214 aa).

Helical transmembrane passes span 43–63 (IQKPNVIIMYISVLVLFAAHI), 84–104 (IEWAKSNFFRICGALVFIPVI), 116–136 (ALVIFVFLMGFPQRSIMEYFI), and 150–170 (PVTRIFIIGAAVFSCVMFGIF).

It is found in the host membrane. This is an uncharacterized protein from Citrus leprosis virus C (isolate Citrus sinesis/Brazil/Cordeiropolis/2003) (CiLV-C).